Consider the following 326-residue polypeptide: 3-methyl-2-oxobutanoate hydroxymethyltransferase 1 (326 aa).

Residues aspartate 52, aspartate 91, and glutamate 122 each coordinate Mg(2+). 3-methyl-2-oxobutanoate contacts are provided by residues 52–53 and aspartate 91; that span reads DS. The active-site Proton acceptor is glutamate 189.

It belongs to the PanB family. As to quaternary structure, homodecamer; pentamer of dimers. Requires Mg(2+) as cofactor.

The protein resides in the cytoplasm. The enzyme catalyses 3-methyl-2-oxobutanoate + (6R)-5,10-methylene-5,6,7,8-tetrahydrofolate + H2O = 2-dehydropantoate + (6S)-5,6,7,8-tetrahydrofolate. It participates in cofactor biosynthesis; (R)-pantothenate biosynthesis; (R)-pantoate from 3-methyl-2-oxobutanoate: step 1/2. Functionally, catalyzes the reversible reaction in which hydroxymethyl group from 5,10-methylenetetrahydrofolate is transferred onto alpha-ketoisovalerate to form ketopantoate. In Bradyrhizobium diazoefficiens (strain JCM 10833 / BCRC 13528 / IAM 13628 / NBRC 14792 / USDA 110), this protein is 3-methyl-2-oxobutanoate hydroxymethyltransferase 1.